Consider the following 193-residue polypeptide: Large ribosomal subunit protein eL19A (193 aa).

The interval Q156–E179 is disordered. The span at A164–A174 shows a compositional bias: basic residues.

The protein belongs to the eukaryotic ribosomal protein eL19 family. Component of the large ribosomal subunit (LSU). Mature yeast ribosomes consist of a small (40S) and a large (60S) subunit. The 40S small subunit contains 1 molecule of ribosomal RNA (18S rRNA) and at least 33 different proteins. The large 60S subunit contains 3 rRNA molecules (25S, 5.8S and 5S rRNA) and at least 46 different proteins. eL19 lies in close proximity to the binding site for eukaryotic initiation factor eIF4G.

It localises to the cytoplasm. Functionally, component of the ribosome, a large ribonucleoprotein complex responsible for the synthesis of proteins in the cell. The small ribosomal subunit (SSU) binds messenger RNAs (mRNAs) and translates the encoded message by selecting cognate aminoacyl-transfer RNA (tRNA) molecules. The large subunit (LSU) contains the ribosomal catalytic site termed the peptidyl transferase center (PTC), which catalyzes the formation of peptide bonds, thereby polymerizing the amino acids delivered by tRNAs into a polypeptide chain. The nascent polypeptides leave the ribosome through a tunnel in the LSU and interact with protein factors that function in enzymatic processing, targeting, and the membrane insertion of nascent chains at the exit of the ribosomal tunnel. eL19 may play a role in the last stages of translation initiation, in particular subunit joining and shedding/releasing factors. In Schizosaccharomyces pombe (strain 972 / ATCC 24843) (Fission yeast), this protein is Large ribosomal subunit protein eL19A (rpl1901).